We begin with the raw amino-acid sequence, 553 residues long: Effector protein HopAB2 (553 aa).

Disordered stretches follow at residues 1 to 123 (MAGI…APRR), 198 to 227 (AVHQ…GSSQ), and 239 to 275 (APNQ…AAMR). The host recognition; Pto interaction stretch occupies residues 1 to 308 (MAGINRAGPS…LRTALERHVM (308 aa)). Over residues 24-39 (SGQAHGSGSGASSSNS) the composition is skewed to low complexity. Residues 47–60 (SNTPPSNAPAPPPT) show a composition bias toward pro residues. The span at 217-227 (SPAASSSGSSQ) shows a compositional bias: low complexity. The segment covering 242–255 (QGRSSNTAASQTPV) has biased composition (polar residues). The segment at 309-553 (QRLPIPLDIG…IAKYAFRIVP (245 aa)) is E3 ubiquitin-protein ligase. The short motif at 325 to 328 (GINP) is the Interaction with Pto-kinase element. The segment at 361–380 (APRPAVPVAPATASRRPDGT) is disordered. The interval 512 to 529 (KDLAFMDMKKLAQFLAGK) is required for E3 ubiquitin-protein ligase and anti-PCD activities and pathogenesis.

The protein belongs to the HopAB family. As to quaternary structure, interacts physically with plant cell Pto. Auto-ubiquitinated.

Its subcellular location is the secreted. Functionally, effector protein involved in gene-for-gene resistance in tomato plants. It is recognized by the host Pto resistance protein and elicits Pto and Prf-dependent hypersensitive response (HR) and programmed cell death (PCD), resulting in host immunity. In susceptible plants, acts as a virulence factor by suppressing PCD and HR-based plant immunity. This function requires its E3 ubiquitin ligase activity probably by recruiting E2 enzymes and transferring ubiquitin molecules to cellular proteins involved in regulation of PCD and targeting them for degradation. Also, induces expression of host genes involved in ethylene biosynthesis and signaling, in particular ACO1 and ACO2, encoding the ethylene-forming enzyme ACC oxidase. The polypeptide is Effector protein HopAB2 (hopAB2) (Pseudomonas syringae pv. tomato (strain ATCC BAA-871 / DC3000)).